The following is a 478-amino-acid chain: Cytochrome c-552 (478 aa).

Positions 1-26 (MARKTLRARRFFSLIFPFFFITSVYA) are cleaved as a signal peptide. Histidine 94 is a binding site for heme c. Residues cysteine 122, cysteine 125, and lysine 126 each coordinate heme. Heme c contacts are provided by cysteine 160, cysteine 163, histidine 164, cysteine 209, cysteine 212, and histidine 213. Ca(2+)-binding residues include glutamate 215, tyrosine 216, lysine 261, and glutamine 263. Tyrosine 216 contacts substrate. Histidine 264 provides a ligand contact to substrate. Residues histidine 275, cysteine 282, cysteine 285, histidine 286, histidine 301, cysteine 314, cysteine 317, histidine 318, and histidine 393 each coordinate heme c.

It belongs to the cytochrome c-552 family. Ca(2+) serves as cofactor. The cofactor is heme c.

It localises to the periplasm. The enzyme catalyses 6 Fe(III)-[cytochrome c] + NH4(+) + 2 H2O = 6 Fe(II)-[cytochrome c] + nitrite + 8 H(+). Its pathway is nitrogen metabolism; nitrate reduction (assimilation). In terms of biological role, catalyzes the reduction of nitrite to ammonia, consuming six electrons in the process. In Salmonella typhi, this protein is Cytochrome c-552.